The chain runs to 313 residues: Protein FixB (313 aa).

255–283 is a binding site for FAD; it reads LYLAVGISGQIQHMVGANASQTIFAINKD.

Belongs to the ETF alpha-subunit/FixB family. In terms of assembly, heterodimer of FixA and FixB.

It participates in amine and polyamine metabolism; carnitine metabolism. In terms of biological role, required for anaerobic carnitine reduction. May bring reductant to CaiA. The protein is Protein FixB of Escherichia coli (strain SMS-3-5 / SECEC).